A 337-amino-acid polypeptide reads, in one-letter code: Transcription factor bHLH121 (337 aa).

The region spanning 58 to 108 (ARKSQKAGREKLRREKLNEHFVELGNVLDPERPKNDKATILTDTVQLLKEL) is the bHLH domain. Residues 235–337 (VHIPQNPGNR…AGGQKPDDAK (103 aa)) form a disordered region. Composition is skewed to basic and acidic residues over residues 244-263 (RSREPRAKVSRESRSEKAED) and 280-291 (SDKDTLQRPEKT). Positions 297-317 (NNNNNSIEESSHSSKCSSSPS) are enriched in low complexity.

In terms of assembly, homodimer. Expressed constitutively in roots, leaves, stems, and flowers.

It is found in the nucleus. This Arabidopsis thaliana (Mouse-ear cress) protein is Transcription factor bHLH121 (BHLH121).